A 459-amino-acid polypeptide reads, in one-letter code: Mitochondrial distribution and morphology protein 10 (459 aa).

Belongs to the MDM10 family. Component of the ER-mitochondria encounter structure (ERMES) or MDM complex, composed of MMM1, MDM10, MDM12 and MDM34. Associates with the mitochondrial outer membrane sorting assembly machinery SAM(core) complex.

Its subcellular location is the mitochondrion outer membrane. Component of the ERMES/MDM complex, which serves as a molecular tether to connect the endoplasmic reticulum and mitochondria. Components of this complex are involved in the control of mitochondrial shape and protein biogenesis and may function in phospholipid exchange. MDM10 is involved in the late assembly steps of the general translocase of the mitochondrial outer membrane (TOM complex). Functions in the TOM40-specific route of the assembly of outer membrane beta-barrel proteins, including the association of TOM40 with the receptor TOM22 and small TOM proteins. Can associate with the SAM(core) complex as well as the MDM12-MMM1 complex, both involved in late steps of the major beta-barrel assembly pathway, that is responsible for biogenesis of all outer membrane beta-barrel proteins. May act as a switch that shuttles between both complexes and channels precursor proteins into the TOM40-specific pathway. Plays a role in mitochondrial morphology and in the inheritance of mitochondria. The chain is Mitochondrial distribution and morphology protein 10 from Clavispora lusitaniae (strain ATCC 42720) (Yeast).